The following is a 195-amino-acid chain: Interferon omega-2 (195 aa).

An N-terminal signal peptide occupies residues 1–23 (MALLPSLLTALVVYELWPCGALG). Cystine bridges form between cysteine 24/cysteine 122 and cysteine 52/cysteine 162. N-linked (GlcNAc...) asparagine glycosylation occurs at asparagine 101.

It belongs to the alpha/beta interferon family.

The protein resides in the secreted. The polypeptide is Interferon omega-2 (Equus caballus (Horse)).